Consider the following 582-residue polypeptide: MFEPYLTTPLLLKAANTPHHIPKMSRICSDRPSTLVKYGNRVQPFPFPERQWPNKVLKTAPVLFSTDLRDGNQSLPNPMTFEQKLSLYKLLVSIGFKEIEVAYPCANQAEFDFVRHLIETPGLIPEDVLIQVITPCQEETIKRAVESVRGAKQAILFTYLPSSDNYRDTVLKISEDDWVERARWGAAYARSITKDSEDPVVRSTRWTFNFGFEDFANARIGAIIRCTEAVRAEWNPSKDEKMIIGVASSVEASTPNVFADQIECLSGNISNRDTVRLTVHTHNDRGGAVASAELASLAGADRIEGCLFGNGERAGNMDLVVYALNLLTQGIEPGIDLSRLDEIRKVYEDITELPVHPRTPYSGAYYLKAFSGAHQDAISKGLRLRTSATQEGKPCAVWPAWRVPYLPLDPADIGRSLDDVVGINSQSGKGGVAWVVNLGLGLDLPPGLARTFSKAVKERSIHFGREMSSDEVCMAFLEEYQVLRAADKSDDDMIQAVLRTESPLVAALGQVVGLSSLSASITSHTLADDVLSYAAYANVTPEESKPSLWGVGLGVSLQQAKLRAVVSALQVSDGSMSWVRLA.

A Pyruvate carboxyltransferase domain is found at 61–341; the sequence is PVLFSTDLRD…EPGIDLSRLD (281 aa).

This sequence belongs to the alpha-IPM synthase/homocitrate synthase family. LeuA type 2 subfamily.

The catalysed reaction is 3-methyl-2-oxobutanoate + acetyl-CoA + H2O = (2S)-2-isopropylmalate + CoA + H(+). It participates in mycotoxin biosynthesis. Isopropyl malate synthase; part of the gene clusters that mediate the biosynthesis of AM-toxins, host-selective toxins (HSTs) causing Alternaria blotch on apple, a worldwide distributed disease. AM-toxins are cyclic depsipeptides containing the 3 residues 2-hydroxy-isovaleric acid (2-HIV), dehydroalanine, L-alanine which are common for all 3 AM-toxins I to III. The fourth precursor is L-alpha-amino-methoxyphenyl-valeric acid (L-Amv) for AM-toxin I, L-alpha-amino-phenyl-valeric acid (L-Apv) for AM-toxin II, and L-alpha-amino-hydroxyphenyl-valeric acid (L-Ahv) for AM-toxin III. AM-toxins have two target sites for affecting susceptible apple cells; they cause invagination of the plasma membrane and electrolyte loss and chloroplast disorganization. The non-ribosomal peptide synthetase AMT1 contains 4 catalytic modules and is responsible for activation of each residue in AM-toxin. The aldo-keto reductase AMT2 catalyzes the conversion of 2-keto-isovaleric acid (2-KIV) to 2-hydroxy-isovaleric acid (2-HIV), one of the precursor residues incorporated by AMT1 during AM-toxin biosynthesis, by reduction of its ketone to an alcohol. The cytochrome P450 monooxygenase AMT3 and the thioesterase AMT4 are also important for AM-toxin production, but their exact function within the AM-toxin biosynthesis are not known yet. Up to 21 proteins (including AMT1 to AMT4) are predicted to be involved in AM-toxin biosynthesis since their expression ishighly up-regulated in AM-toxin-producing cultures. The chain is Isopropyl malate synthase AMT7 from Alternaria alternata (Alternaria rot fungus).